The sequence spans 390 residues: UPF0496 protein At1g20180 (390 aa).

2 helical membrane passes run 228–248 (LGGY…LIIA) and 250–270 (HSIL…FCLL).

This sequence belongs to the UPF0496 family.

The protein localises to the membrane. This Arabidopsis thaliana (Mouse-ear cress) protein is UPF0496 protein At1g20180.